A 345-amino-acid polypeptide reads, in one-letter code: Phosphate acyltransferase (345 aa).

Belongs to the PlsX family. As to quaternary structure, homodimer. Probably interacts with PlsY.

It localises to the cytoplasm. The catalysed reaction is a fatty acyl-[ACP] + phosphate = an acyl phosphate + holo-[ACP]. The protein operates within lipid metabolism; phospholipid metabolism. Catalyzes the reversible formation of acyl-phosphate (acyl-PO(4)) from acyl-[acyl-carrier-protein] (acyl-ACP). This enzyme utilizes acyl-ACP as fatty acyl donor, but not acyl-CoA. This is Phosphate acyltransferase from Anaplasma phagocytophilum (strain HZ).